A 464-amino-acid chain; its full sequence is Plant intracellular Ras-group-related LRR protein 3 (464 aa).

A coiled-coil region spans residues 106–138 (AAVVSLEEVHEGYEKQLRDLEEEIGRVYASAVE). LRR repeat units lie at residues 160–183 (GGVVERIDLSDHELKLLPDALGKI), 184–206 (VGLVSLNVSRNNLRFLPDTISGL), 207–230 (EKLEELDLSSNRLVFLPDSIGLLL), 232–252 (LRILNVTGNKLTLLPESIAQC), 254–275 (SLVELDASFNNLTSLPANFGYG), 276–299 (LLNLERLSIQLNKIRFFPNSICEM), 301–322 (SLRYLDAHMNEIHGLPIAIGRL), 323–347 (TNLEVMNLSSNFSDLIELPDTISDL), 348–370 (ANLRELDLSNNQIRVLPDSFFRL), and 372–393 (KLEKLNLDQNPLEYPPQEMVNQ). Residues 398–406 (VREFMRKRW) carry the GVYW; degenerate motif.

It belongs to the SHOC2 family. As to expression, widely expressed.

Its function is as follows. Leucine-rich repeat protein that likely mediates protein interactions, possibly in the context of signal transduction. The chain is Plant intracellular Ras-group-related LRR protein 3 (PIRL3) from Arabidopsis thaliana (Mouse-ear cress).